The following is a 523-amino-acid chain: Thiamine pathway transporter THI73 (523 aa).

The Cytoplasmic portion of the chain corresponds to 1–79 (MKNMSQRSMD…LSPKVLRKVD (79 aa)). The chain crosses the membrane as a helical span at residues 80 to 100 (LFILPFLCCTYLLMFLDKALL). Topologically, residues 101–118 (NYAASMGIKDHLKGNEFS) are extracellular. Residues 119 to 139 (NLGTIFSAAYIFMEPVVTYLI) traverse the membrane as a helical segment. Over 140 to 141 (QK) the chain is Cytoplasmic. Residues 142-162 (FPISKILGTFITVWGIVLACH) form a helical membrane-spanning segment. Topologically, residues 163-176 (AACKTYASLMVVRT) are extracellular. The helical transmembrane segment at 177–197 (LLGLFESSSAVGCIAISGMYY) threads the bilayer. Residues 198–207 (TKSEQSARIG) are Cytoplasmic-facing. A helical membrane pass occupies residues 208–228 (FWATQAGTGYIVGGLISFGFL). Topologically, residues 229-239 (HYHGTAFTSWQ) are extracellular. Residues 240-260 (IMFLVVGLVTVAFGVLTFLYL) traverse the membrane as a helical segment. Residues 261–312 (PDNVTNAWFLNKEEKIQVVEHIRANQTGLETKKFKKQQVKELFLHDKFTWPM) are Cytoplasmic-facing. The helical transmembrane segment at 313–333 (LLLTACSQISTGAIGTFSVTI) threads the bilayer. The Extracellular segment spans residues 334–345 (TGTFGFDKYETA). Residues 346 to 366 (LLQLPIGAITAMIILITTQML) form a helical membrane-spanning segment. The Cytoplasmic portion of the chain corresponds to 367–371 (SRWGH). Residues 372-392 (ITLITTSMYIPAIIGCIVLIS) form a helical membrane-spanning segment. At 393–400 (LPLSHKIG) the chain is on the extracellular side. Residues 401–421 (NLFSLYLLYSGSCVITNIYIW) form a helical membrane-spanning segment. Residues 422 to 432 (NSCNTSGYTKR) lie on the Cytoplasmic side of the membrane. A helical transmembrane segment spans residues 433-452 (VFRNAITMIVYNVSCIIAPQ). The Extracellular segment spans residues 453 to 466 (MFRAYSAPRYIPAK). A helical membrane pass occupies residues 467–487 (IALLVTQCVCVPLQLYIGYIC). At 488–523 (KKENEKRDKEQEGQERKKYQFLDLTDIENRNFRYIY) the chain is on the cytoplasmic side.

It belongs to the major facilitator superfamily. Allantoate permease family.

It localises to the endoplasmic reticulum membrane. The protein localises to the cell membrane. Functionally, transports either thiamine or, rather, a related metabolite involved in the thiamine biosynthesis pathway. This chain is Thiamine pathway transporter THI73 (THI73), found in Saccharomyces cerevisiae (strain ATCC 204508 / S288c) (Baker's yeast).